A 907-amino-acid polypeptide reads, in one-letter code: Translation initiation factor IF-2 (907 aa).

3 stretches are compositionally biased toward basic and acidic residues: residues 223 to 235 (LAQRRQEEAKRAA), 251 to 263 (VAKEAPKPEEKNA), and 270 to 281 (GGKDWNDSDGKK). Residues 223–320 (LAQRRQEEAK…ENQQHAFTAP (98 aa)) form a disordered region. The tr-type G domain occupies 407-576 (PRPPVVTVMG…LLQAEVLELK (170 aa)). A G1 region spans residues 416–423 (GHVDHGKT). 416 to 423 (GHVDHGKT) serves as a coordination point for GTP. The interval 441–445 (GITQH) is G2. A G3 region spans residues 462–465 (DTPG). Residues 462-466 (DTPGH) and 516-519 (NKID) contribute to the GTP site. The interval 516–519 (NKID) is G4. A G5 region spans residues 552 to 554 (SAK).

It belongs to the TRAFAC class translation factor GTPase superfamily. Classic translation factor GTPase family. IF-2 subfamily.

The protein resides in the cytoplasm. In terms of biological role, one of the essential components for the initiation of protein synthesis. Protects formylmethionyl-tRNA from spontaneous hydrolysis and promotes its binding to the 30S ribosomal subunits. Also involved in the hydrolysis of GTP during the formation of the 70S ribosomal complex. The chain is Translation initiation factor IF-2 from Methylobacillus flagellatus (strain ATCC 51484 / DSM 6875 / VKM B-1610 / KT).